The primary structure comprises 192 residues: E3 ubiquitin-protein ligase RNF185 (192 aa).

Over residues 1-13 (MASKGPSASASTE) the composition is skewed to polar residues. The disordered stretch occupies residues 1-30 (MASKGPSASASTENSNAGGPSGSSNGTGES). At 1-130 (MASKGPSASA…GGFQGFGFGD (130 aa)) the chain is on the cytoplasmic side. Residues 14–27 (NSNAGGPSGSSNGT) show a composition bias toward low complexity. Residues 29–80 (ESGGQDSTFECNICLDTAKDAVISLCGHLFCWPCLHQWLETRPNRQVCPVCK) form a required for ubiquitin ligase activity and protection against ER stress-induced cell death region. The RING-type zinc finger occupies 39-80 (CNICLDTAKDAVISLCGHLFCWPCLHQWLETRPNRQVCPVCK). The tract at residues 90–123 (PLYGRGSTGQQDPREKTPPRPQGQRPEPENRGGF) is disordered. A helical membrane pass occupies residues 131 to 151 (GGFQMSFGIGAFPFGIFATAF). Residues 152–171 (NINDGRPPPAVPGTPQYVDE) lie on the Mitochondrial intermembrane side of the membrane. The chain crosses the membrane as a helical span at residues 172-192 (QFLSRLFLFVALVIMFWLLIA).

In terms of assembly, interacts with ATG5 and BNIP1. In terms of tissue distribution, ubiquitously expressed with high expression in testis.

It localises to the mitochondrion outer membrane. Its subcellular location is the endoplasmic reticulum membrane. It carries out the reaction S-ubiquitinyl-[E2 ubiquitin-conjugating enzyme]-L-cysteine + [acceptor protein]-L-lysine = [E2 ubiquitin-conjugating enzyme]-L-cysteine + N(6)-ubiquitinyl-[acceptor protein]-L-lysine.. It functions in the pathway protein modification; protein ubiquitination. Its function is as follows. E3 ubiquitin-protein ligase that regulates selective mitochondrial autophagy by mediating 'Lys-63'-linked polyubiquitination of BNIP1. Acts in the endoplasmic reticulum (ER)-associated degradation (ERAD) pathway, which targets misfolded proteins that accumulate in the endoplasmic reticulum (ER) for ubiquitination and subsequent proteasome-mediated degradation. Protects cells from ER stress-induced apoptosis. Responsible for the cotranslational ubiquitination and degradation of CFTR in the ERAD pathway. Also acts as a regulator of the innate antiviral response by catalyzing 'Lys-27'-linked polyubiquitination of CGAS, thereby promoting CGAS cyclic GMP-AMP synthase activity. Preferentially associates with the E2 enzymes UBE2J1 and UBE2J2. The protein is E3 ubiquitin-protein ligase RNF185 (Rnf185) of Mus musculus (Mouse).